A 301-amino-acid polypeptide reads, in one-letter code: MLKSSKKEDDSKKNHDNKSIFHLRKLFSPIKSLFSNKVPDDFFSVIKRLKTNSQKMTLDERNILANLLKLKGKTIEDIMVPRSDIAAIKLTTNIEELNESIKVKIPHTRTLIYDGTLDNIVGFIHIKDLFKALVTKQNFRLKKLIRKHIIAAPSMKLLDLLAKMRREKTHIAIVIDEYGGTDGLVTIEDVMEALVGRIDDEHDQKSEYDNYKVINNSTIISNARVEVEVLEEIIGEKLKDDDDEFDTISGLVLTKMGNVPAVGTKINVSENIEIEVTDANPRSLKQVKITLKNSLKRAKSS.

CBS domains follow at residues 79–141 (MVPR…NFRL) and 144–201 (LIRK…IDDE).

Belongs to the UPF0053 family. Hemolysin C subfamily.

The sequence is that of Possible hemolysin C (tlyC) from Rickettsia bellii (strain RML369-C).